Consider the following 466-residue polypeptide: Arginine biosynthesis bifunctional protein ArgJ, mitochondrial (466 aa).

Residues Thr-194, Lys-223, Thr-234, Glu-321, Asn-461, and Thr-466 each coordinate substrate. The Nucleophile role is filled by Thr-234.

The protein belongs to the ArgJ family. As to quaternary structure, heterodimer of an alpha and a beta chain. The alpha and beta chains are autoproteolytically processed from a single precursor protein within the mitochondrion.

It localises to the mitochondrion matrix. It carries out the reaction N(2)-acetyl-L-ornithine + L-glutamate = N-acetyl-L-glutamate + L-ornithine. It catalyses the reaction L-glutamate + acetyl-CoA = N-acetyl-L-glutamate + CoA + H(+). It functions in the pathway amino-acid biosynthesis; L-arginine biosynthesis; L-ornithine and N-acetyl-L-glutamate from L-glutamate and N(2)-acetyl-L-ornithine (cyclic): step 1/1. The protein operates within amino-acid biosynthesis; L-arginine biosynthesis; N(2)-acetyl-L-ornithine from L-glutamate: step 1/4. Catalyzes two activities which are involved in the cyclic version of arginine biosynthesis: the synthesis of acetylglutamate from glutamate and acetyl-CoA, and of ornithine by transacetylation between acetylornithine and glutamate. This chain is Arginine biosynthesis bifunctional protein ArgJ, mitochondrial, found in Aspergillus flavus (strain ATCC 200026 / FGSC A1120 / IAM 13836 / NRRL 3357 / JCM 12722 / SRRC 167).